The primary structure comprises 51 residues: Large ribosomal subunit protein bL33 (51 aa).

The protein belongs to the bacterial ribosomal protein bL33 family.

This Vesicomyosocius okutanii subsp. Calyptogena okutanii (strain HA) protein is Large ribosomal subunit protein bL33.